A 121-amino-acid chain; its full sequence is Ig heavy chain V region MPC 11 (121 aa).

The region spanning 1-112 (EAQLQQSGAE…NSSPYFDSWG (112 aa)) is the Ig-like domain.

This Mus musculus (Mouse) protein is Ig heavy chain V region MPC 11.